Reading from the N-terminus, the 994-residue chain is Regulator of telomere elongation helicase 1 homolog (994 aa).

The Helicase ATP-binding domain occupies 15–300 (PKLSVKFPFE…EETARSEADA (286 aa)). 50–57 (SPTGTGKT) provides a ligand contact to ATP. [4Fe-4S] cluster contacts are provided by Cys-142, Cys-160, Cys-169, and Cys-208. A DEAH box motif is present at residues 251–254 (DEAH). Positions 876–895 (FKIETPGPSTSTLTQKSEPP) are disordered. The segment covering 882 to 892 (GPSTSTLTQKS) has biased composition (polar residues).

It belongs to the helicase family. RAD3/XPD subfamily.

It localises to the nucleus. The enzyme catalyses ATP + H2O = ADP + phosphate + H(+). A probable ATP-dependent DNA helicase implicated in DNA repair and the maintenance of genomic stability. Acts as an anti-recombinase to counteract toxic recombination and limit crossover during meiosis. Regulates meiotic recombination and crossover homeostasis by physically dissociating strand invasion events and thereby promotes noncrossover repair by meiotic synthesis dependent strand annealing (SDSA) as well as disassembly of D loop recombination intermediates. The sequence is that of Regulator of telomere elongation helicase 1 homolog from Caenorhabditis elegans.